The chain runs to 219 residues: Histidinol-phosphate aminotransferase (219 aa).

It belongs to the class-II pyridoxal-phosphate-dependent aminotransferase family. Histidinol-phosphate aminotransferase subfamily. Homodimer. Requires pyridoxal 5'-phosphate as cofactor.

The enzyme catalyses L-histidinol phosphate + 2-oxoglutarate = 3-(imidazol-4-yl)-2-oxopropyl phosphate + L-glutamate. The protein operates within amino-acid biosynthesis; L-histidine biosynthesis; L-histidine from 5-phospho-alpha-D-ribose 1-diphosphate: step 7/9. The chain is Histidinol-phosphate aminotransferase (hisC) from Mycolicibacterium smegmatis (Mycobacterium smegmatis).